The sequence spans 75 residues: Theromacin (75 aa).

Intrachain disulfides connect Cys-2–Cys-9, Cys-24–Cys-28, Cys-31–Cys-73, Cys-39–Cys-47, and Cys-57–Cys-59.

Belongs to the macin family.

The protein resides in the secreted. Functionally, has a bactericial activity. The protein is Theromacin of Hirudo medicinalis (Medicinal leech).